A 142-amino-acid polypeptide reads, in one-letter code: MVLSAADKNNVKGIFTKIAGHAEEYGAETLERMFTTYPPTKTYFPHFDLSHGSAQIKGHGKKVVAALIEAANHIDDIAGTLSKLSDLHAHKLRVDPVNFKLLGQCFLVVVAIHHPAALTPEVHASLDKFLCAVGTVLTAKYR.

The Globin domain occupies 2–142; the sequence is VLSAADKNNV…VGTVLTAKYR (141 aa). H59 serves as a coordination point for O2. A heme b-binding site is contributed by H88.

Belongs to the globin family. In terms of assembly, heterotetramer of two alpha chains and two beta chains. As to expression, red blood cells.

Involved in oxygen transport from the lung to the various peripheral tissues. The protein is Hemoglobin subunit alpha-A (HBAA) of Gallus gallus (Chicken).